A 469-amino-acid polypeptide reads, in one-letter code: Ufm1-specific protease 2 (469 aa).

Methionine 1 bears the N-acetylmethionine mark. Residues cysteine 302, aspartate 426, and histidine 428 contribute to the active site.

It belongs to the peptidase C78 family. Expressed in brain.

It is found in the endoplasmic reticulum. The protein localises to the cytoplasm. Its subcellular location is the nucleus. Thiol-dependent isopeptidase that specifically cleaves UFM1, a ubiquitin-like modifier protein, from conjugated proteins, such as CD274/PD-L1, CYB5R3, DDRGK1, MRE11, RPL26/uL24, TRIP4 and RPL26/uL24. While it is also able to mediate the processing of UFM1 precursors, a prerequisite for conjugation reactions, UFSP2 mainly acts as a protein deUFMylase that mediates deconjugation of UFM1 from target proteins. Mediates deUFMylation of RPL26/uL24, a critical step to release the UFM1 ribosome E3 ligase (UREL) complex during the recycling of 60S ribosome subunits from the endoplasmic reticulum. Catalyzes deUFMylation of TRIP4, regulating intracellular nuclear receptors transactivation and thereby regulate cell proliferation and differentiation. The chain is Ufm1-specific protease 2 from Homo sapiens (Human).